Consider the following 284-residue polypeptide: 2-dehydro-3-deoxyphosphooctonate aldolase (284 aa).

Belongs to the KdsA family.

It localises to the cytoplasm. It carries out the reaction D-arabinose 5-phosphate + phosphoenolpyruvate + H2O = 3-deoxy-alpha-D-manno-2-octulosonate-8-phosphate + phosphate. Its pathway is carbohydrate biosynthesis; 3-deoxy-D-manno-octulosonate biosynthesis; 3-deoxy-D-manno-octulosonate from D-ribulose 5-phosphate: step 2/3. It functions in the pathway bacterial outer membrane biogenesis; lipopolysaccharide biosynthesis. This chain is 2-dehydro-3-deoxyphosphooctonate aldolase, found in Paraburkholderia phymatum (strain DSM 17167 / CIP 108236 / LMG 21445 / STM815) (Burkholderia phymatum).